The chain runs to 379 residues: Alanine racemase (379 aa).

Lys35 (proton acceptor; specific for D-alanine) is an active-site residue. Lys35 bears the N6-(pyridoxal phosphate)lysine mark. Arg133 is a substrate binding site. Tyr265 (proton acceptor; specific for L-alanine) is an active-site residue. Met312 lines the substrate pocket.

Belongs to the alanine racemase family. It depends on pyridoxal 5'-phosphate as a cofactor.

The catalysed reaction is L-alanine = D-alanine. Its pathway is amino-acid biosynthesis; D-alanine biosynthesis; D-alanine from L-alanine: step 1/1. Functionally, catalyzes the interconversion of L-alanine and D-alanine. May also act on other amino acids. This chain is Alanine racemase (alr), found in Treponema denticola (strain ATCC 35405 / DSM 14222 / CIP 103919 / JCM 8153 / KCTC 15104).